Here is a 468-residue protein sequence, read N- to C-terminus: MRSWVVGARLLLLLQLVLVLGAVRLPPCTDPRHCTDPPRYTPDWPSLDSRPLPAWFDEAKFGVFVHWGVFSVPAWGSEWFWWHWQGEKLPQYESFMKENYPPDFSYADFGPRFTARFFNPDSWADLFKAAGAKYVVLTTKHHEGYTNWPSPVSWNWNSKDVGPHRDLVGELGTAIRKRNIRYGLYHSLLEWFHPLYLRDKKNGFKTQYFVNAKTMPELYDLVNRYKPDLIWSDGEWECPDTYWNSTDFLAWLYNDSPVKDEVVVNDRWGQNCSCHHGGYYNCKDKFQPETLPDHKWEMCTSIDQRSWGYRRDMEMADITNESTIISELVQTVSLGGNYLLNVGPTKDGLIVPIFQERLLAVGKWLSINGEAIYASKPWRVQSEKNSVWYTSKGLAVYAILLHWPEYGILSLISPIATSTTKVTMLGIQKDLKWSLNPSGKGLLVFLPQLPPAALPTEFAWTIKLTGVK.

Positions 1 to 22 (MRSWVVGARLLLLLQLVLVLGA) are cleaved as a signal peptide. Phosphothreonine is present on Thr173. N-linked (GlcNAc...) asparagine glycans are attached at residues Asn244, Asn271, and Asn320.

The protein belongs to the glycosyl hydrolase 29 family. As to quaternary structure, homotetramer.

Its subcellular location is the lysosome. The catalysed reaction is an alpha-L-fucoside + H2O = L-fucose + an alcohol. It catalyses the reaction a neolactoside IV(2)-alpha-Fuc-nLc4Cer(d18:1(4E)) + H2O = a neolactoside nLc4Cer(d18:1(4E)) + L-fucose. The enzyme catalyses a neolactoside IV(2)-alpha-Fuc-nLc4Cer(d18:0) + H2O = a neolactoside nLc4Cer(d18:0) + L-fucose. Its function is as follows. Alpha-L-fucosidase is responsible for hydrolyzing the alpha-1,6-linked fucose joined to the reducing-end N-acetylglucosamine of the carbohydrate moieties of glycoproteins. The protein is Tissue alpha-L-fucosidase (FUCA1) of Bos taurus (Bovine).